The chain runs to 636 residues: Protein cueball (636 aa).

Positions 1–27 (MKLCTSQQFGVAVLFIVLNICSPLADA) are cleaved as a signal peptide. The Extracellular portion of the chain corresponds to 28 to 517 (SPIAWDFAVT…ADGPSSLRSG (490 aa)). N-linked (GlcNAc...) asparagine glycans are attached at residues Asn83 and Asn109. 3 LDL-receptor class B repeats span residues 122 to 169 (RNLF…DICR), 170 to 214 (RQLY…DQLS), and 215 to 260 (DRIF…TEDT). An N-linked (GlcNAc...) asparagine glycan is attached at Asn190. Asn285 and Asn339 each carry an N-linked (GlcNAc...) asparagine glycan. EGF-like domains lie at 350–384 (RMDALEREHCLNGASYMSRGNFCICPVGYKGARCE) and 419–456 (EYYKCNGHCLNDGHCLVDKESGELSCDCRENFTGTRCE). 5 cysteine pairs are disulfide-bonded: Cys359-Cys372, Cys374-Cys383, Cys423-Cys433, Cys427-Cys444, and Cys446-Cys455. N-linked (GlcNAc...) asparagine glycans are attached at residues Asn449, Asn458, and Asn493. The helical transmembrane segment at 518–538 (SVIIVLVVGIVSSLALVAVIV) threads the bilayer. Over 539 to 636 (HGLRLIYKPK…IHNMEDDLLT (98 aa)) the chain is Cytoplasmic.

It belongs to the cueball family.

The protein localises to the cell membrane. Its function is as follows. Has a role in spermatogenesis and oogenesis. The chain is Protein cueball from Drosophila virilis (Fruit fly).